The sequence spans 256 residues: Bialaphos biosynthetic pathway regulatory protein (256 aa).

An HTH luxR-type domain is found at 184–249 (ETADAIDVSD…QLGARAAECR (66 aa)). The H-T-H motif DNA-binding region spans 208–227 (DVAMARSLGISTRTLRRVIT).

In terms of biological role, involved in the regulation of the biosynthesis of phosphinothricin tripeptide (PTT), also known as bialaphos (BA), a natural-product antibiotic and potent herbicide. The protein is Bialaphos biosynthetic pathway regulatory protein (brpA) of Streptomyces hygroscopicus.